The chain runs to 513 residues: ATP synthase subunit alpha (513 aa).

Residue 169 to 176 participates in ATP binding; that stretch reads GDRQTGKS.

The protein belongs to the ATPase alpha/beta chains family. In terms of assembly, F-type ATPases have 2 components, CF(1) - the catalytic core - and CF(0) - the membrane proton channel. CF(1) has five subunits: alpha(3), beta(3), gamma(1), delta(1), epsilon(1). CF(0) has three main subunits: a(1), b(2) and c(9-12). The alpha and beta chains form an alternating ring which encloses part of the gamma chain. CF(1) is attached to CF(0) by a central stalk formed by the gamma and epsilon chains, while a peripheral stalk is formed by the delta and b chains.

The protein localises to the cell membrane. The catalysed reaction is ATP + H2O + 4 H(+)(in) = ADP + phosphate + 5 H(+)(out). Functionally, produces ATP from ADP in the presence of a proton gradient across the membrane. The alpha chain is a regulatory subunit. The protein is ATP synthase subunit alpha of Baumannia cicadellinicola subsp. Homalodisca coagulata.